A 116-amino-acid polypeptide reads, in one-letter code: Large ribosomal subunit protein bL19 (116 aa).

It belongs to the bacterial ribosomal protein bL19 family.

This protein is located at the 30S-50S ribosomal subunit interface and may play a role in the structure and function of the aminoacyl-tRNA binding site. The protein is Large ribosomal subunit protein bL19 of Staphylococcus carnosus (strain TM300).